Here is a 66-residue protein sequence, read N- to C-terminus: MARWNVCSYCGKPFEPGTGKMYVRNDGRVLFFCSRKCERYYFMGRNPRKLKWTKAYQEARLQRGGE.

Residues C7, C10, C33, and C37 each contribute to the Zn(2+) site. The C4-type zinc-finger motif lies at 7 to 37 (CSYCGKPFEPGTGKMYVRNDGRVLFFCSRKC).

It belongs to the eukaryotic ribosomal protein eL24 family. Part of the 50S ribosomal subunit. Forms a cluster with proteins L3 and L14. Requires Zn(2+) as cofactor.

Functionally, binds to the 23S rRNA. This Pyrococcus furiosus (strain ATCC 43587 / DSM 3638 / JCM 8422 / Vc1) protein is Large ribosomal subunit protein eL24.